We begin with the raw amino-acid sequence, 514 residues long: Cholesterol side-chain cleavage enzyme, mitochondrial (514 aa).

Residues 1–39 constitute a mitochondrion transit peptide; that stretch reads SFRLSLSASTYAQRGSFTTPEHDFTLFPHRNHSVTSESR. A heme-binding site is contributed by cysteine 461.

This sequence belongs to the cytochrome P450 family. Requires heme as cofactor.

It is found in the mitochondrion inner membrane. The enzyme catalyses 6 reduced [adrenodoxin] + cholesterol + 3 O2 + 6 H(+) = 4-methylpentanal + pregnenolone + 6 oxidized [adrenodoxin] + 4 H2O. The protein operates within lipid metabolism; C21-steroid hormone metabolism. Its function is as follows. Catalyzes the side-chain cleavage reaction of cholesterol to pregnenolone, the precursor of most steroid hormones. In Hypanus americanus (Southern stingray), this protein is Cholesterol side-chain cleavage enzyme, mitochondrial (CYP11A1).